A 57-amino-acid polypeptide reads, in one-letter code: Large ribosomal subunit protein bL32c (57 aa).

This sequence belongs to the bacterial ribosomal protein bL32 family.

It is found in the plastid. Its subcellular location is the chloroplast. The chain is Large ribosomal subunit protein bL32c from Amborella trichopoda.